The following is a 183-amino-acid chain: Large ribosomal subunit protein uL5 (183 aa).

Belongs to the universal ribosomal protein uL5 family. As to quaternary structure, part of the 50S ribosomal subunit; contacts the 5S rRNA and probably tRNA. Forms a bridge to the 30S subunit in the 70S ribosome.

Functionally, this is one of the proteins that bind and probably mediate the attachment of the 5S RNA into the large ribosomal subunit, where it forms part of the central protuberance. In the 70S ribosome it contacts protein S13 of the 30S subunit (bridge B1b), connecting the 2 subunits; this bridge is implicated in subunit movement. May contact the P site tRNA; the 5S rRNA and some of its associated proteins might help stabilize positioning of ribosome-bound tRNAs. This Thermococcus kodakarensis (strain ATCC BAA-918 / JCM 12380 / KOD1) (Pyrococcus kodakaraensis (strain KOD1)) protein is Large ribosomal subunit protein uL5.